Reading from the N-terminus, the 151-residue chain is Large ribosomal subunit protein uL15 (151 aa).

A disordered region spans residues 1-62 (MVKLNELFPK…GGQMPLYRRV (62 aa)). Residues 11–20 (HGSRKAKRRI) show a composition bias toward basic residues.

The protein belongs to the universal ribosomal protein uL15 family. Part of the 50S ribosomal subunit.

Its function is as follows. Binds to the 23S rRNA. This is Large ribosomal subunit protein uL15 from Elusimicrobium minutum (strain Pei191).